Reading from the N-terminus, the 264-residue chain is Acyl-[acyl-carrier-protein]--UDP-N-acetylglucosamine O-acyltransferase (264 aa).

This sequence belongs to the transferase hexapeptide repeat family. LpxA subfamily. Homotrimer.

Its subcellular location is the cytoplasm. It carries out the reaction a (3R)-hydroxyacyl-[ACP] + UDP-N-acetyl-alpha-D-glucosamine = a UDP-3-O-[(3R)-3-hydroxyacyl]-N-acetyl-alpha-D-glucosamine + holo-[ACP]. The protein operates within glycolipid biosynthesis; lipid IV(A) biosynthesis; lipid IV(A) from (3R)-3-hydroxytetradecanoyl-[acyl-carrier-protein] and UDP-N-acetyl-alpha-D-glucosamine: step 1/6. Its function is as follows. Involved in the biosynthesis of lipid A, a phosphorylated glycolipid that anchors the lipopolysaccharide to the outer membrane of the cell. The protein is Acyl-[acyl-carrier-protein]--UDP-N-acetylglucosamine O-acyltransferase of Chlorobium phaeobacteroides (strain DSM 266 / SMG 266 / 2430).